Reading from the N-terminus, the 619-residue chain is Chitinase C (619 aa).

Residues 1–30 form the signal peptide; that stretch reads MRFRHKAAALAATLALPLAGLVGLASPAQA. The CBM2 domain occupies 31–134; it reads ATSATATFAK…KLNGGSCDGT (104 aa). A Fibronectin type-III domain is found at 144–229; that stretch reads APGTPTASNI…GAVKVTTTGG (86 aa). Residues 212 to 236 form a disordered region; the sequence is ADQTGPASGAVKVTTTGGGDGGNPG. Gly residues predominate over residues 227-236; sequence TGGGDGGNPG. One can recognise a GH18 domain in the interval 240–619; sequence EVKMGYFTNW…TPAVRTTRRH (380 aa). Residues 312-313 and 339-342 contribute to the chitin site; these read DQ and GGWT. E382 serves as the catalytic Proton donor. Chitin contacts are provided by residues Y383, 449-452, and W589; that span reads MTYD.

This sequence belongs to the glycosyl hydrolase 18 family. Chitinase class II subfamily.

It catalyses the reaction Random endo-hydrolysis of N-acetyl-beta-D-glucosaminide (1-&gt;4)-beta-linkages in chitin and chitodextrins.. The sequence is that of Chitinase C (chiC) from Streptomyces lividans.